The sequence spans 848 residues: Leucine--tRNA ligase (848 aa).

Basic and acidic residues predominate over residues 1-16 (MCPEQPHDTRAERDEM). The tract at residues 1 to 30 (MCPEQPHDTRAERDEMSEQTQQAAQPAETA) is disordered. Low complexity predominate over residues 18–30 (EQTQQAAQPAETA). Residues 69-79 (PYPSGDLHMGH) carry the 'HIGH' region motif. The 'KMSKS' region signature appears at 614–618 (KMSKS). ATP is bound at residue Lys-617.

Belongs to the class-I aminoacyl-tRNA synthetase family.

It localises to the cytoplasm. The enzyme catalyses tRNA(Leu) + L-leucine + ATP = L-leucyl-tRNA(Leu) + AMP + diphosphate. The polypeptide is Leucine--tRNA ligase (Nocardioides sp. (strain ATCC BAA-499 / JS614)).